Reading from the N-terminus, the 677-residue chain is Methionine--tRNA ligase (677 aa).

The 'HIGH' region motif lies at 15–25 (PYANGSIHLGH). The Zn(2+) site is built by Cys-146, Cys-149, Cys-159, and Cys-162. The 'KMSKS' region signature appears at 333–337 (KMSKS). Lys-336 is a binding site for ATP. The 103-residue stretch at 575 to 677 (DFAKVDLRVA…EGAKPGQQVK (103 aa)) folds into the tRNA-binding domain.

It belongs to the class-I aminoacyl-tRNA synthetase family. MetG type 1 subfamily. Homodimer. Zn(2+) serves as cofactor.

The protein resides in the cytoplasm. It carries out the reaction tRNA(Met) + L-methionine + ATP = L-methionyl-tRNA(Met) + AMP + diphosphate. Is required not only for elongation of protein synthesis but also for the initiation of all mRNA translation through initiator tRNA(fMet) aminoacylation. The sequence is that of Methionine--tRNA ligase from Enterobacter sp. (strain 638).